The sequence spans 1021 residues: Ubiquitin-activating enzyme E1 1 (1021 aa).

Positions 22, 442, and 468 each coordinate ATP. Asp-470 contributes to the Mg(2+) binding site. Residues Arg-479, Lys-492, Val-518, and 542–543 (DN) each bind ATP. Mg(2+) is bound at residue Asp-542. The Glycyl thioester intermediate role is filled by Cys-598.

Belongs to the ubiquitin-activating E1 family. As to quaternary structure, monomer.

It is found in the cytoplasm. Its subcellular location is the nucleus. It catalyses the reaction ATP + ubiquitin + [E1 ubiquitin-activating enzyme]-L-cysteine = AMP + diphosphate + S-ubiquitinyl-[E1 ubiquitin-activating enzyme]-L-cysteine.. It participates in protein modification; protein ubiquitination. Its function is as follows. E1 ubiquitin-activating enzyme that catalyzes the first step in ubiquitin conjugation to mark cellular proteins for degradation through the ubiquitin-proteasome system. Activates ubiquitin by first adenylating its C-terminal glycine residue with ATP, and thereafter linking this residue to the side chain of a cysteine residue in E1, yielding a ubiquitin-E1 thioester and free AMP. This Candida albicans (strain WO-1) (Yeast) protein is Ubiquitin-activating enzyme E1 1 (UBA1).